The primary structure comprises 356 residues: DNA polymerase IV (356 aa).

Residues 7 to 188 (IIHIDMDAFY…IPVTKFYGVG (182 aa)) enclose the UmuC domain. Residues Asp11 and Asp106 each coordinate Mg(2+). Residue Glu107 is part of the active site.

It belongs to the DNA polymerase type-Y family. As to quaternary structure, monomer. Mg(2+) serves as cofactor.

It is found in the cytoplasm. It carries out the reaction DNA(n) + a 2'-deoxyribonucleoside 5'-triphosphate = DNA(n+1) + diphosphate. Functionally, poorly processive, error-prone DNA polymerase involved in untargeted mutagenesis. Copies undamaged DNA at stalled replication forks, which arise in vivo from mismatched or misaligned primer ends. These misaligned primers can be extended by PolIV. Exhibits no 3'-5' exonuclease (proofreading) activity. May be involved in translesional synthesis, in conjunction with the beta clamp from PolIII. In Listeria monocytogenes serotype 4b (strain CLIP80459), this protein is DNA polymerase IV.